The following is a 412-amino-acid chain: Allantoate amidohydrolase (412 aa).

Positions 84, 95, 130, and 193 each coordinate Zn(2+). Allantoate contacts are provided by Arg-218, Asn-278, and Arg-291. His-385 is a Zn(2+) binding site.

It belongs to the peptidase M20 family. In terms of assembly, homodimer. The cofactor is Zn(2+).

The protein resides in the cytoplasm. The enzyme catalyses allantoate + H2O + 2 H(+) = (S)-2-ureidoglycine + NH4(+) + CO2. The protein operates within nitrogen metabolism; (S)-allantoin degradation. In terms of biological role, involved in the anaerobic nitrogen utilization via the assimilation of allantoin. Catalyzes specifically the hydrolysis of allantoate to yield CO2, NH3 and S-ureidoglycine, which is unstable and readily undergoes a second deamination by S-ureidoglycine aminohydrolase AllE to yield S-ureidoglycolate and NH3. The chain is Allantoate amidohydrolase from Bacillus subtilis (strain 168).